We begin with the raw amino-acid sequence, 192 residues long: MIRIGILALQGDVSEHLEMTRRTVEEMGIDAEVVRVRTAEEASTVDAIIISGGESTVIGRLMEETGIKDVIIREKKPVMGTCAGMVLLADETDYEQPLLGLIDMKVKRNAFGRQRDSFEDEIDILGRKFHGIFIRAPAVLEVGEGVEVLSELDDMIIAVKDGCNLALAFHPELGEDTGLHEYFIKEVLNCVE.

53–55 (GES) lines the L-glutamine pocket. The active-site Nucleophile is Cys82. L-glutamine is bound by residues Arg108 and 134–135 (IR). Residues His170 and Glu172 each act as charge relay system in the active site.

Belongs to the glutaminase PdxT/SNO family. As to quaternary structure, in the presence of PdxS, forms a dodecamer of heterodimers. Only shows activity in the heterodimer.

It catalyses the reaction aldehydo-D-ribose 5-phosphate + D-glyceraldehyde 3-phosphate + L-glutamine = pyridoxal 5'-phosphate + L-glutamate + phosphate + 3 H2O + H(+). It carries out the reaction L-glutamine + H2O = L-glutamate + NH4(+). It functions in the pathway cofactor biosynthesis; pyridoxal 5'-phosphate biosynthesis. In terms of biological role, catalyzes the hydrolysis of glutamine to glutamate and ammonia as part of the biosynthesis of pyridoxal 5'-phosphate. The resulting ammonia molecule is channeled to the active site of PdxS. This is Pyridoxal 5'-phosphate synthase subunit PdxT from Methanothermobacter thermautotrophicus (strain ATCC 29096 / DSM 1053 / JCM 10044 / NBRC 100330 / Delta H) (Methanobacterium thermoautotrophicum).